We begin with the raw amino-acid sequence, 428 residues long: Homoserine dehydrogenase (428 aa).

NADPH-binding residues include phenylalanine 10, threonine 12, valine 13, arginine 44, and lysine 106. NAD(+) is bound at residue valine 13. Valine 13, arginine 44, and lysine 106 together coordinate NADP(+). Na(+)-binding residues include glutamate 130, valine 133, glycine 135, and isoleucine 137. NADP(+)-binding residues include glycine 188 and glutamate 191. Residues glutamate 191 and aspartate 202 each coordinate L-homoserine. Catalysis depends on lysine 206, which acts as the Proton donor. Residue glycine 303 participates in NADPH binding. Glycine 303 contributes to the NAD(+) binding site. Residue glycine 303 participates in NADP(+) binding. One can recognise an ACT domain in the interval 351 to 425; the sequence is YFSVETPDST…DFKLLNYFKV (75 aa).

This sequence belongs to the homoserine dehydrogenase family. Requires a metal cation as cofactor.

It catalyses the reaction L-homoserine + NADP(+) = L-aspartate 4-semialdehyde + NADPH + H(+). The catalysed reaction is L-homoserine + NAD(+) = L-aspartate 4-semialdehyde + NADH + H(+). It participates in amino-acid biosynthesis; L-methionine biosynthesis via de novo pathway; L-homoserine from L-aspartate: step 3/3. The protein operates within amino-acid biosynthesis; L-threonine biosynthesis; L-threonine from L-aspartate: step 3/5. Functionally, catalyzes the conversion of L-aspartate-beta-semialdehyde (L-Asa) to L-homoserine (L-Hse), the third step in the biosynthesis of threonine and methionine from aspartate. The polypeptide is Homoserine dehydrogenase (hom) (Lactococcus lactis subsp. lactis (strain IL1403) (Streptococcus lactis)).